A 400-amino-acid chain; its full sequence is Argininosuccinate synthase (400 aa).

An ATP-binding site is contributed by 9-17 (AYSGGLDTS). Tyr87 serves as a coordination point for L-citrulline. Gly117 contributes to the ATP binding site. Residues Thr119, Asn123, and Asp124 each coordinate L-aspartate. L-citrulline is bound at residue Asn123. 5 residues coordinate L-citrulline: Arg127, Ser176, Ser185, Glu261, and Tyr273.

Belongs to the argininosuccinate synthase family. Type 1 subfamily. In terms of assembly, homotetramer.

Its subcellular location is the cytoplasm. The catalysed reaction is L-citrulline + L-aspartate + ATP = 2-(N(omega)-L-arginino)succinate + AMP + diphosphate + H(+). It participates in amino-acid biosynthesis; L-arginine biosynthesis; L-arginine from L-ornithine and carbamoyl phosphate: step 2/3. In Pelodictyon phaeoclathratiforme (strain DSM 5477 / BU-1), this protein is Argininosuccinate synthase.